A 210-amino-acid chain; its full sequence is Histidine biosynthesis bifunctional protein HisIE (210 aa).

A phosphoribosyl-AMP cyclohydrolase region spans residues 1-106 (MTKYKIDFSK…SCFNTEVPFS (106 aa)). The interval 107-210 (VQTLAQTVQD…KGERQNIEQW (104 aa)) is phosphoribosyl-ATP pyrophosphohydrolase.

This sequence in the N-terminal section; belongs to the PRA-CH family. In the C-terminal section; belongs to the PRA-PH family.

The protein resides in the cytoplasm. It carries out the reaction 1-(5-phospho-beta-D-ribosyl)-ATP + H2O = 1-(5-phospho-beta-D-ribosyl)-5'-AMP + diphosphate + H(+). The catalysed reaction is 1-(5-phospho-beta-D-ribosyl)-5'-AMP + H2O = 1-(5-phospho-beta-D-ribosyl)-5-[(5-phospho-beta-D-ribosylamino)methylideneamino]imidazole-4-carboxamide. The protein operates within amino-acid biosynthesis; L-histidine biosynthesis; L-histidine from 5-phospho-alpha-D-ribose 1-diphosphate: step 2/9. Its pathway is amino-acid biosynthesis; L-histidine biosynthesis; L-histidine from 5-phospho-alpha-D-ribose 1-diphosphate: step 3/9. The sequence is that of Histidine biosynthesis bifunctional protein HisIE (hisI) from Staphylococcus aureus (strain Mu50 / ATCC 700699).